The chain runs to 632 residues: 1-deoxy-D-xylulose-5-phosphate synthase (632 aa).

Residues His73 and 114 to 116 (SHA) each bind thiamine diphosphate. Residue Asp146 participates in Mg(2+) binding. Thiamine diphosphate contacts are provided by residues 147-148 (GA), Asn176, Tyr287, and Glu368. Asn176 serves as a coordination point for Mg(2+).

It belongs to the transketolase family. DXPS subfamily. As to quaternary structure, homodimer. It depends on Mg(2+) as a cofactor. Thiamine diphosphate is required as a cofactor.

The catalysed reaction is D-glyceraldehyde 3-phosphate + pyruvate + H(+) = 1-deoxy-D-xylulose 5-phosphate + CO2. It participates in metabolic intermediate biosynthesis; 1-deoxy-D-xylulose 5-phosphate biosynthesis; 1-deoxy-D-xylulose 5-phosphate from D-glyceraldehyde 3-phosphate and pyruvate: step 1/1. Catalyzes the acyloin condensation reaction between C atoms 2 and 3 of pyruvate and glyceraldehyde 3-phosphate to yield 1-deoxy-D-xylulose-5-phosphate (DXP). This Corynebacterium glutamicum (strain R) protein is 1-deoxy-D-xylulose-5-phosphate synthase.